A 756-amino-acid chain; its full sequence is 5-methyltetrahydropteroyltriglutamate--homocysteine methyltransferase (756 aa).

Residues 16-19 and Lys116 contribute to the 5-methyltetrahydropteroyltri-L-glutamate site; that span reads RELK. L-homocysteine contacts are provided by residues 435–437 and Glu488; that span reads IGS. L-methionine-binding positions include 435–437 and Glu488; that span reads IGS. 5-methyltetrahydropteroyltri-L-glutamate is bound by residues 519–520 and Trp565; that span reads RC. An L-homocysteine-binding site is contributed by Asp603. Asp603 serves as a coordination point for L-methionine. A 5-methyltetrahydropteroyltri-L-glutamate-binding site is contributed by Glu609. Positions 645, 647, and 669 each coordinate Zn(2+). His698 (proton donor) is an active-site residue. Position 730 (Cys730) interacts with Zn(2+).

Belongs to the vitamin-B12 independent methionine synthase family. The cofactor is Zn(2+).

The catalysed reaction is 5-methyltetrahydropteroyltri-L-glutamate + L-homocysteine = tetrahydropteroyltri-L-glutamate + L-methionine. Its pathway is amino-acid biosynthesis; L-methionine biosynthesis via de novo pathway; L-methionine from L-homocysteine (MetE route): step 1/1. Its function is as follows. Catalyzes the transfer of a methyl group from 5-methyltetrahydrofolate to homocysteine resulting in methionine formation. The chain is 5-methyltetrahydropteroyltriglutamate--homocysteine methyltransferase from Marinobacter nauticus (strain ATCC 700491 / DSM 11845 / VT8) (Marinobacter aquaeolei).